Reading from the N-terminus, the 464-residue chain is MGSKTPGNHRRGPNESSPHPAIDAINPPKQAAASRLVHSSLEGESEGGEDEDDDKPGADLKAVGQIGNNGQKRNKRRKKKKKNTKELEILQTTPPRVALANIFRSQRYPEAEIVKYSTDNDNLQRTTAEELRHISVLNAMDDEFLNDYRKAAEVHRQVRQYVQTIIKPGIALSQLAEEIEDGVRALTNHQGLETGDALKAGMAFPTGLCLNNIAAHWTPNPGAKEVILKYDDVLKIDFGVHVNGRIVDSAFTIAFNPVYDNLLAAVKDATNAGLKEAGIDARIAHISETIQNVMESYEVELNQKVIPVKAVRNITGHNVLHYKIHGDKQVPFVKTQTNQRMEEGDVFAIETFGSTGKAYLDDATGIYGYGYDENASTAGLHHSSAKSLLKTIKENFGTLVFSRRYLERLGVQRYHLGMRSLVTNGIVQSYAPLVDVPGSYVAQFEHTVLLRPNCKEVISRGDDY.

The interval 1 to 86 (MGSKTPGNHR…RKKKKKNTKE (86 aa)) is disordered. The segment covering 43 to 54 (GESEGGEDEDDD) has biased composition (acidic residues). Over residues 72–83 (KRNKRRKKKKKN) the composition is skewed to basic residues. His-216 serves as a coordination point for substrate. A divalent metal cation contacts are provided by Asp-237, Asp-248, and His-317. His-325 serves as a coordination point for substrate. The a divalent metal cation site is built by Glu-350 and Glu-445.

This sequence belongs to the peptidase M24A family. Methionine aminopeptidase eukaryotic type 2 subfamily. Co(2+) is required as a cofactor. The cofactor is Zn(2+). Requires Mn(2+) as cofactor. It depends on Fe(2+) as a cofactor.

It is found in the cytoplasm. It carries out the reaction Release of N-terminal amino acids, preferentially methionine, from peptides and arylamides.. In terms of biological role, cotranslationally removes the N-terminal methionine from nascent proteins. The N-terminal methionine is often cleaved when the second residue in the primary sequence is small and uncharged (Met-Ala-, Cys, Gly, Pro, Ser, Thr, or Val). The polypeptide is Methionine aminopeptidase 2 (Ajellomyces capsulatus (strain NAm1 / WU24) (Darling's disease fungus)).